The following is a 441-amino-acid chain: Damage-control phosphatase ARMT1 (441 aa).

A2 carries the N-acetylalanine modification. K40 bears the N6-acetyllysine mark. At S102 the chain carries Phosphoserine. 2 residues coordinate Mn(2+): D253 and N254. Residue 253-254 coordinates substrate; that stretch reads DN. E258 and D291 together coordinate S-adenosyl-L-methionine. A Mn(2+)-binding site is contributed by D291. Residues 367-371 and K404 contribute to the substrate site; that span reads DLNYR. A Subfamily III RTxK motif motif is present at residues 401 to 404; sequence RTLK.

Belongs to the damage-control phosphatase family. Sugar phosphate phosphatase III subfamily. Mn(2+) is required as a cofactor. It depends on Ni(2+) as a cofactor. Post-translationally, automethylated.

The catalysed reaction is beta-D-fructose 1-phosphate + H2O = D-fructose + phosphate. It carries out the reaction beta-D-fructose 6-phosphate = dihydroxyacetone + D-glyceraldehyde 3-phosphate. The enzyme catalyses L-glutamyl-[protein] + S-adenosyl-L-methionine = [protein]-L-glutamate 5-O-methyl ester + S-adenosyl-L-homocysteine. In terms of biological role, metal-dependent phosphatase that shows phosphatase activity against several substrates, including fructose-1-phosphate and fructose-6-phosphate. Its preference for fructose-1-phosphate, a strong glycating agent that causes DNA damage rather than a canonical yeast metabolite, suggests a damage-control function in hexose phosphate metabolism. Has also been shown to have O-methyltransferase activity that methylates glutamate residues of target proteins to form gamma-glutamyl methyl ester residues. Possibly methylates PCNA, suggesting it is involved in the DNA damage response. This chain is Damage-control phosphatase ARMT1, found in Macaca fascicularis (Crab-eating macaque).